A 224-amino-acid polypeptide reads, in one-letter code: Glycerol-3-phosphate acyltransferase (224 aa).

5 helical membrane-spanning segments follow: residues 14–34, 64–84, 98–118, 127–147, and 160–180; these read FFPLAATLLGYLIGSLSFAVI, TAAIVTLLLDAAKGWLPVMLV, MALVGLAAFIGHLYPVFFNFA, LGVLLGLSPILALATGATWLI, and LTAAVFVPVYYVFGDGMAWYL.

This sequence belongs to the PlsY family. Probably interacts with PlsX.

The protein localises to the cell inner membrane. The enzyme catalyses an acyl phosphate + sn-glycerol 3-phosphate = a 1-acyl-sn-glycero-3-phosphate + phosphate. It participates in lipid metabolism; phospholipid metabolism. Catalyzes the transfer of an acyl group from acyl-phosphate (acyl-PO(4)) to glycerol-3-phosphate (G3P) to form lysophosphatidic acid (LPA). This enzyme utilizes acyl-phosphate as fatty acyl donor, but not acyl-CoA or acyl-ACP. The protein is Glycerol-3-phosphate acyltransferase of Albidiferax ferrireducens (strain ATCC BAA-621 / DSM 15236 / T118) (Rhodoferax ferrireducens).